The chain runs to 526 residues: Probable polyol transporter 4 (526 aa).

Disordered regions lie at residues 1 to 21 (MMKN…AVSV) and 28 to 47 (YQRM…AEAR). Residues 29-47 (QRMDSDAEESQNHREAEAR) are compositionally biased toward basic and acidic residues. A run of 12 helical transmembrane segments spans residues 63-83 (SLNN…VLFI), 92-112 (VQTE…SLAG), 125-145 (MALA…APSF), 153-173 (TLAG…IAEI), 180-200 (GFFT…GYVS), 215-235 (IMLA…CVIP), 300-320 (MLIV…DATV), 340-360 (AATV…TFLI), 371-391 (VSTI…TFLG), 395-415 (LGIT…SIGM), 437-457 (ALGA…FLSV), and 465-485 (GTFF…YVLV).

It belongs to the major facilitator superfamily. Sugar transporter (TC 2.A.1.1) family.

It localises to the membrane. Its function is as follows. Plasma membrane sugar-proton symporter. This Arabidopsis thaliana (Mouse-ear cress) protein is Probable polyol transporter 4 (PLT4).